A 291-amino-acid polypeptide reads, in one-letter code: 4-hydroxy-tetrahydrodipicolinate synthase (291 aa).

A pyruvate-binding site is contributed by Thr-45. Catalysis depends on Tyr-131, which acts as the Proton donor/acceptor. Lys-159 (schiff-base intermediate with substrate) is an active-site residue. Ile-202 is a binding site for pyruvate.

This sequence belongs to the DapA family. As to quaternary structure, homotetramer; dimer of dimers.

It localises to the cytoplasm. It carries out the reaction L-aspartate 4-semialdehyde + pyruvate = (2S,4S)-4-hydroxy-2,3,4,5-tetrahydrodipicolinate + H2O + H(+). Its pathway is amino-acid biosynthesis; L-lysine biosynthesis via DAP pathway; (S)-tetrahydrodipicolinate from L-aspartate: step 3/4. Its function is as follows. Catalyzes the condensation of (S)-aspartate-beta-semialdehyde [(S)-ASA] and pyruvate to 4-hydroxy-tetrahydrodipicolinate (HTPA). The protein is 4-hydroxy-tetrahydrodipicolinate synthase of Methanosarcina mazei (strain ATCC BAA-159 / DSM 3647 / Goe1 / Go1 / JCM 11833 / OCM 88) (Methanosarcina frisia).